The chain runs to 354 residues: S-adenosylmethionine:tRNA ribosyltransferase-isomerase (354 aa).

It belongs to the QueA family. As to quaternary structure, monomer.

Its subcellular location is the cytoplasm. The enzyme catalyses 7-aminomethyl-7-carbaguanosine(34) in tRNA + S-adenosyl-L-methionine = epoxyqueuosine(34) in tRNA + adenine + L-methionine + 2 H(+). It functions in the pathway tRNA modification; tRNA-queuosine biosynthesis. Functionally, transfers and isomerizes the ribose moiety from AdoMet to the 7-aminomethyl group of 7-deazaguanine (preQ1-tRNA) to give epoxyqueuosine (oQ-tRNA). In Salmonella heidelberg (strain SL476), this protein is S-adenosylmethionine:tRNA ribosyltransferase-isomerase.